The sequence spans 98 residues: Large ribosomal subunit protein uL23 (98 aa).

Belongs to the universal ribosomal protein uL23 family. In terms of assembly, part of the 50S ribosomal subunit. Contacts protein L29, and trigger factor when it is bound to the ribosome.

Functionally, one of the early assembly proteins it binds 23S rRNA. One of the proteins that surrounds the polypeptide exit tunnel on the outside of the ribosome. Forms the main docking site for trigger factor binding to the ribosome. In Sorangium cellulosum (strain So ce56) (Polyangium cellulosum (strain So ce56)), this protein is Large ribosomal subunit protein uL23.